The following is a 231-amino-acid chain: Orotate phosphoribosyltransferase (231 aa).

5-phospho-alpha-D-ribose 1-diphosphate is bound by residues K27, 79–80, R106, K107, K110, H112, and 133–141; these read YK and DDVMTAGTA. Residues T137 and R166 each coordinate orotate.

This sequence belongs to the purine/pyrimidine phosphoribosyltransferase family. PyrE subfamily. Homodimer. It depends on Mg(2+) as a cofactor.

It carries out the reaction orotidine 5'-phosphate + diphosphate = orotate + 5-phospho-alpha-D-ribose 1-diphosphate. Its pathway is pyrimidine metabolism; UMP biosynthesis via de novo pathway; UMP from orotate: step 1/2. In terms of biological role, catalyzes the transfer of a ribosyl phosphate group from 5-phosphoribose 1-diphosphate to orotate, leading to the formation of orotidine monophosphate (OMP). This chain is Orotate phosphoribosyltransferase, found in Bifidobacterium animalis subsp. lactis (strain AD011).